A 247-amino-acid chain; its full sequence is Adenosylcobinamide-GDP ribazoletransferase (247 aa).

Helical transmembrane passes span 31–51 (ILFY…VTCI), 55–75 (LPAL…TGGL), 109–129 (IGVL…YVLI), 135–155 (LFLI…FLTT), 183–203 (VLLL…SFLI), and 227–247 (AIEI…FYLV).

Belongs to the CobS family. Mg(2+) serves as cofactor.

The protein localises to the cell inner membrane. The catalysed reaction is alpha-ribazole + adenosylcob(III)inamide-GDP = adenosylcob(III)alamin + GMP + H(+). It catalyses the reaction alpha-ribazole 5'-phosphate + adenosylcob(III)inamide-GDP = adenosylcob(III)alamin 5'-phosphate + GMP + H(+). It participates in cofactor biosynthesis; adenosylcobalamin biosynthesis; adenosylcobalamin from cob(II)yrinate a,c-diamide: step 7/7. In terms of biological role, joins adenosylcobinamide-GDP and alpha-ribazole to generate adenosylcobalamin (Ado-cobalamin). Also synthesizes adenosylcobalamin 5'-phosphate from adenosylcobinamide-GDP and alpha-ribazole 5'-phosphate. The chain is Adenosylcobinamide-GDP ribazoletransferase from Acinetobacter baumannii (strain ACICU).